We begin with the raw amino-acid sequence, 718 residues long: Polyribonucleotide nucleotidyltransferase (718 aa).

Residues Asp496 and Asp502 each contribute to the Mg(2+) site. Residues 563 to 622 enclose the KH domain; that stretch reads PRLLTIKIDPDMIGLVIGPGGKTIKGITEETGAKIDIEDDGTVTISAVDENKAKRARNIV. In terms of domain architecture, S1 motif spans 632-700; it reads GDVYAGRVTR…NKGRINLTRL (69 aa).

This sequence belongs to the polyribonucleotide nucleotidyltransferase family. The cofactor is Mg(2+).

Its subcellular location is the cytoplasm. It carries out the reaction RNA(n+1) + phosphate = RNA(n) + a ribonucleoside 5'-diphosphate. Involved in mRNA degradation. Catalyzes the phosphorolysis of single-stranded polyribonucleotides processively in the 3'- to 5'-direction. The protein is Polyribonucleotide nucleotidyltransferase of Trichormus variabilis (strain ATCC 29413 / PCC 7937) (Anabaena variabilis).